The primary structure comprises 316 residues: Ninja-family protein 2 (316 aa).

Disordered regions lie at residues 1–29 (MASR…GEPD) and 72–236 (TSDD…TSTG). Over residues 99-108 (ERWRRREMQS) the composition is skewed to basic and acidic residues. The span at 156–166 (DQGNTSSSMPE) shows a compositional bias: polar residues. 2 stretches are compositionally biased toward low complexity: residues 179 to 199 (SSME…QNKS) and 222 to 235 (LRTL…TTST).

The protein belongs to the Ninja family.

The protein localises to the nucleus. The chain is Ninja-family protein 2 (AFP-B1) from Triticum aestivum (Wheat).